Reading from the N-terminus, the 291-residue chain is Elongation factor Ts (291 aa).

Positions 84 to 87 (TDFV) are involved in Mg(2+) ion dislocation from EF-Tu.

It belongs to the EF-Ts family.

It is found in the cytoplasm. Functionally, associates with the EF-Tu.GDP complex and induces the exchange of GDP to GTP. It remains bound to the aminoacyl-tRNA.EF-Tu.GTP complex up to the GTP hydrolysis stage on the ribosome. This is Elongation factor Ts from Bifidobacterium adolescentis (strain ATCC 15703 / DSM 20083 / NCTC 11814 / E194a).